The primary structure comprises 280 residues: MDIKAYAKINISLDVIGKRDDGYHLLKMIMQNIDLYDIVQVEKIPNGIKLKCNKPYVPTDERNLAYKAAKLFKETYNIKSGIYINIEKNIPVSAGLAGGSTDAAAVLKIMNKMFNINVTQSELMNLGLKLGADVPYCICGGTALCEGIGEKVTKLKPFRDKILVVVKPPFGVSTKEVYKAFDLSKVIFHPKTNELISNIEKNNIEFISNNMKNLLENVTLGRYKIISTIKEEINICGALGSMMSGSGPTVFGFFDDMLKAQKCYEKMKEKYVDVFITRTI.

Residue Lys-8 is part of the active site. 91 to 101 (PVSAGLAGGST) provides a ligand contact to ATP. Asp-133 is a catalytic residue.

This sequence belongs to the GHMP kinase family. IspE subfamily.

The enzyme catalyses 4-CDP-2-C-methyl-D-erythritol + ATP = 4-CDP-2-C-methyl-D-erythritol 2-phosphate + ADP + H(+). Its pathway is isoprenoid biosynthesis; isopentenyl diphosphate biosynthesis via DXP pathway; isopentenyl diphosphate from 1-deoxy-D-xylulose 5-phosphate: step 3/6. Its function is as follows. Catalyzes the phosphorylation of the position 2 hydroxy group of 4-diphosphocytidyl-2C-methyl-D-erythritol. This Clostridium botulinum (strain Alaska E43 / Type E3) protein is 4-diphosphocytidyl-2-C-methyl-D-erythritol kinase.